The chain runs to 292 residues: UTP--glucose-1-phosphate uridylyltransferase (292 aa).

This sequence belongs to the UDPGP type 2 family.

The catalysed reaction is alpha-D-glucose 1-phosphate + UTP + H(+) = UDP-alpha-D-glucose + diphosphate. In terms of biological role, may play a role in stationary phase survival. This chain is UTP--glucose-1-phosphate uridylyltransferase (galU), found in Mycoplasma genitalium (strain ATCC 33530 / DSM 19775 / NCTC 10195 / G37) (Mycoplasmoides genitalium).